Reading from the N-terminus, the 329-residue chain is Ketol-acid reductoisomerase (NADP(+)) (329 aa).

One can recognise a KARI N-terminal Rossmann domain in the interval 2 to 182 (TQLFYDTDAD…GGTRAGILET (181 aa)). Residues 25–28 (YGSQ), Ser51, Ser53, and 83–86 (DEFQ) each bind NADP(+). His108 is a catalytic residue. Gly134 contacts NADP(+). Residues 183–328 (NFKEETETDL…KGLRSMFSWL (146 aa)) enclose the KARI C-terminal knotted domain. Asp191, Glu195, Glu227, and Glu231 together coordinate Mg(2+). Ser252 contributes to the substrate binding site.

It belongs to the ketol-acid reductoisomerase family. Mg(2+) is required as a cofactor.

It catalyses the reaction (2R)-2,3-dihydroxy-3-methylbutanoate + NADP(+) = (2S)-2-acetolactate + NADPH + H(+). It carries out the reaction (2R,3R)-2,3-dihydroxy-3-methylpentanoate + NADP(+) = (S)-2-ethyl-2-hydroxy-3-oxobutanoate + NADPH + H(+). The protein operates within amino-acid biosynthesis; L-isoleucine biosynthesis; L-isoleucine from 2-oxobutanoate: step 2/4. It functions in the pathway amino-acid biosynthesis; L-valine biosynthesis; L-valine from pyruvate: step 2/4. Involved in the biosynthesis of branched-chain amino acids (BCAA). Catalyzes an alkyl-migration followed by a ketol-acid reduction of (S)-2-acetolactate (S2AL) to yield (R)-2,3-dihydroxy-isovalerate. In the isomerase reaction, S2AL is rearranged via a Mg-dependent methyl migration to produce 3-hydroxy-3-methyl-2-ketobutyrate (HMKB). In the reductase reaction, this 2-ketoacid undergoes a metal-dependent reduction by NADPH to yield (R)-2,3-dihydroxy-isovalerate. The chain is Ketol-acid reductoisomerase (NADP(+)) from Prochlorococcus marinus (strain AS9601).